A 205-amino-acid chain; its full sequence is Inactive ribonuclease-like protein 9 (205 aa).

A signal peptide spans 1 to 26; the sequence is MMRTLITTHPLPLLLLPQQLLQPVQF. 3 disulfide bridges follow: C98–C153, C116–C168, and C123–C130. N-linked (GlcNAc...) asparagine glycans are attached at residues N131 and N143.

The protein belongs to the pancreatic ribonuclease family.

The protein localises to the secreted. Does not exhibit any ribonuclease activity. The sequence is that of Inactive ribonuclease-like protein 9 (RNASE9) from Pan troglodytes (Chimpanzee).